The chain runs to 981 residues: MDTSSSSGTHPSTFNNLTKQQELTGNDPNDTNRKRIRVACDSCRRKKIKCNGSYPCGNCIQAKNTSNCHFTERPVRKKLKPTKQDNKSTANSNGVSKRKYNDTFSGNSINIKTEKQENTTFGINDNKSSDLESRLSRIENSMSRMMHTLENFSQNFMTQAIRNNHSNSSMFNNNSLSPTPSEDFNKSAFDSEEQQTSHSYKNLKDRVKDANELLKLRNWDEFVGTHSITCIFSRESLDWMEKTLGSYGEEYLTPIRNLPLVFHSELKPYIMKWIDPPVVDKLQRKKLLESPFPTDSKLISKLIDLYYEETSMINILVDESRVRSLFAAYYNNFAEPIATKRRRFKLSELLLMTSILLISLSCLTEDDFSEERITTPASSTSSNYSAASANLLGDYNKNRLIALQNSLENSAIFYYHRISVISEGLETVEALLMFIIYVESNWLTSFFNYTIITVTIRFAQEIGLHRAETYNNLDLEEATKRRKIWWFCYFFDIEFSFKSGKPPVINTNDVTTNSDEDLLRVITQLKQYGPLSPKDRMYSPVCHTISTSLLDLSGSDSICLDILKIIQSGDILDDPFYFQFCALLQSRIRSNSYHDLFIASAEKRDFSSISNTLEKLNADMFELAMYLADEAKPRFYNDPKFTSVQASTGTSIRRDTILAMKLTFFSHLMIINRYPLMIATEDSKFDDRVIKFRNLSLDSARTILMLIKGWHRESASALFYNWAIYFPVAAYLVLVAAIINHPQLPESGTNLNLLIETSLSFFKSSKQWNSSNDSQDKQQNSTICVNKIVAIELIVRLMLRVVIKVYELHNNVEILANNPALQNHLQEAEEKFPDIFQNHAEFTSKMIALVGASPFGGCGSRNTSSCNLRDNSTNHGQNNMNPSPTITNNTYNSNINTGSNSTGEPQVCYAQSPSYNASLSNIINNESTGRSPATSTSINQSMMNENYDLFNDYLIDNSAVNLPFSQFNNLPNFFFDNNLGI.

The span at 1–29 (MDTSSSSGTHPSTFNNLTKQQELTGNDPN) shows a compositional bias: polar residues. Residues 1 to 33 (MDTSSSSGTHPSTFNNLTKQQELTGNDPNDTNR) form a disordered region. Positions 40 to 68 (CDSCRRKKIKCNGSYPCGNCIQAKNTSNC) form a DNA-binding region, zn(2)-C6 fungal-type. Disordered stretches follow at residues 74 to 106 (PVRKKLKPTKQDNKSTANSNGVSKRKYNDTFSG), 165 to 199 (HSNSSMFNNNSLSPTPSEDFNKSAFDSEEQQTSHS), and 868 to 902 (LRDNSTNHGQNNMNPSPTITNNTYNSNINTGSNST). Low complexity predominate over residues 165-177 (HSNSSMFNNNSLS). Residues 868–880 (LRDNSTNHGQNNM) show a composition bias toward polar residues. Over residues 881–902 (NPSPTITNNTYNSNINTGSNST) the composition is skewed to low complexity.

Post-translationally, phosphorylated. Phosphorylation leads to hyperactivation.

It localises to the nucleus. Its activity is regulated as follows. Drugs such as farnesol and 1-dodecanol are able to hyperactivate TAC1 probably via phosphorylation by the Mediator complex. In terms of biological role, transcriptional activator of drug-responsive genes including the ABC-type transporters CDR1 and CDR2, as well as HSP12 and RTA3. Binds the cis-acting regulatory drug-responsive elements (DREs) with the consensus sequence 5'-CGGAWATCGGATATTTTTTT-3' in the promoters of target genes. The sequence is that of Transcription factor TAC1 from Candida albicans (strain SC5314 / ATCC MYA-2876) (Yeast).